We begin with the raw amino-acid sequence, 220 residues long: Adenylate kinase (220 aa).

10–15 contacts ATP; the sequence is GSGKST. Residues 30–59 are NMP; it reads SSGDIIRAEISSRTPLGLEMEKYLSRGDLI. AMP contacts are provided by residues S31, R36, 57-59, 83-86, and Q90; these read DLI and GYPR. Positions 124-161 are LID; the sequence is GRRICSKCGAVYHIEFNPPKIPGKCDICGGDLIQRPDD. R125 lines the ATP pocket. Zn(2+) contacts are provided by C128 and C131. 134-135 is a binding site for ATP; the sequence is VY. Positions 148 and 151 each coordinate Zn(2+). Residues R158 and R169 each contribute to the AMP site. G197 provides a ligand contact to ATP.

Belongs to the adenylate kinase family. In terms of assembly, monomer.

The protein localises to the cytoplasm. The catalysed reaction is AMP + ATP = 2 ADP. It functions in the pathway purine metabolism; AMP biosynthesis via salvage pathway; AMP from ADP: step 1/1. In terms of biological role, catalyzes the reversible transfer of the terminal phosphate group between ATP and AMP. Plays an important role in cellular energy homeostasis and in adenine nucleotide metabolism. This is Adenylate kinase from Pyrococcus horikoshii (strain ATCC 700860 / DSM 12428 / JCM 9974 / NBRC 100139 / OT-3).